The following is a 115-amino-acid chain: Guanylin (115 aa).

A signal peptide spans 1–23 (MNAWLLSVLCLLGALAVLVEGVT). Positions 24-100 (VQDGDLSFPL…LQRLEAIAQD (77 aa)) are excised as a propeptide. Cystine bridges form between C69/C82, C104/C112, and C107/C115.

This sequence belongs to the guanylin family. In terms of tissue distribution, intestine and in low abundance in adrenal gland, kidney, and uterus/oviduct.

It localises to the secreted. Functionally, endogenous activator of intestinal guanylate cyclase. It stimulates this enzyme through the same receptor binding region as the heat-stable enterotoxins. This chain is Guanylin (Guca2a), found in Rattus norvegicus (Rat).